A 423-amino-acid polypeptide reads, in one-letter code: Serine--tRNA ligase (423 aa).

Residue 231-233 (TGE) coordinates L-serine. 262–264 (RSE) is an ATP binding site. E285 lines the L-serine pocket. 349–352 (EISS) contributes to the ATP binding site. S385 is an L-serine binding site.

The protein belongs to the class-II aminoacyl-tRNA synthetase family. Type-1 seryl-tRNA synthetase subfamily. In terms of assembly, homodimer. The tRNA molecule binds across the dimer.

The protein resides in the cytoplasm. It catalyses the reaction tRNA(Ser) + L-serine + ATP = L-seryl-tRNA(Ser) + AMP + diphosphate + H(+). The enzyme catalyses tRNA(Sec) + L-serine + ATP = L-seryl-tRNA(Sec) + AMP + diphosphate + H(+). It participates in aminoacyl-tRNA biosynthesis; selenocysteinyl-tRNA(Sec) biosynthesis; L-seryl-tRNA(Sec) from L-serine and tRNA(Sec): step 1/1. Functionally, catalyzes the attachment of serine to tRNA(Ser). Is also able to aminoacylate tRNA(Sec) with serine, to form the misacylated tRNA L-seryl-tRNA(Sec), which will be further converted into selenocysteinyl-tRNA(Sec). The sequence is that of Serine--tRNA ligase from Coxiella burnetii (strain CbuK_Q154) (Coxiella burnetii (strain Q154)).